Reading from the N-terminus, the 441-residue chain is MQGRVRGSGEDRISILPEPLLCHILSFLRTKDSVRTSVLSSRWRDLWLWVPRLDLDKSDFSDDNPSASFVDKFLNFRGESYLRGFKLNTDHDVYDISTLDACLMRLDKCKIQHFEIENCFGFCILLMPLIIPMCHTLVSLKLSFVILSKFGSLSLPCLEIMHFEKVIFPSDKSAEVLIACSPVLRDLRISQSGDDAVEVLRVCSASLKSFTLKRTDHDYVGNGEYTVVIDTPRLEYLNLKDYQCQGFKIVSMSEYVRVHVDVVFEVIGGTVLSKRNIICDFLSCVSNVRYMTISRRSLEFIYRHLELKPRFKFHDLARLRATMFSNSSPEMLPVILETCPNLKHLTLELVHDSLVTEGTSGLLTVLPRCLISSLASVDIESPITDKATELKLVSYLLENSTTLKKLVLRLNQSCRDKYEPGLLKQVLQSPRCSSLCQLVIL.

An F-box domain is found at 10-56; that stretch reads EDRISILPEPLLCHILSFLRTKDSVRTSVLSSRWRDLWLWVPRLDLD. Residues 366–410 form the FBD domain; that stretch reads LPRCLISSLASVDIESPITDKATELKLVSYLLENSTTLKKLVLRL.

The protein is FBD-associated F-box protein At5g18780 of Arabidopsis thaliana (Mouse-ear cress).